The following is an 843-amino-acid chain: Protein P (843 aa).

The interval 1–177 is terminal protein domain (TP); sequence MPLSYQHFRK…FCGSPYSWEQ (177 aa). A spacer region spans residues 178–346; the sequence is ELQHGRLVFQ…YCLSHIVNLL (169 aa). 2 disordered regions span residues 218–243 and 290–316; these read LKQS…SGSI and STSK…RSQS. Over residues 290–299 the composition is skewed to polar residues; that stretch reads STSKRQSSSG. The polymerase/reverse transcriptase domain (RT) stretch occupies residues 347–690; it reads EDWGPCTEHG…YLHLYPVARQ (344 aa). The 244-residue stretch at 357–600 folds into the Reverse transcriptase domain; that stretch reads EHNIRIPRTP…YSLNFMGYVI (244 aa). The Mg(2+) site is built by aspartate 429, aspartate 551, and aspartate 552.

It belongs to the hepadnaviridae P protein family.

The catalysed reaction is DNA(n) + a 2'-deoxyribonucleoside 5'-triphosphate = DNA(n+1) + diphosphate. It catalyses the reaction Endonucleolytic cleavage to 5'-phosphomonoester.. Activated by host HSP70 and HSP40 in vitro to be able to bind the epsilon loop of the pgRNA. Because deletion of the RNase H region renders the protein partly chaperone-independent, the chaperones may be needed indirectly to relieve occlusion of the RNA-binding site by this domain. Inhibited by several reverse-transcriptase inhibitors: Lamivudine, Adefovir and Entecavir. Its function is as follows. Multifunctional enzyme that converts the viral RNA genome into dsDNA in viral cytoplasmic capsids. This enzyme displays a DNA polymerase activity that can copy either DNA or RNA templates, and a ribonuclease H (RNase H) activity that cleaves the RNA strand of RNA-DNA heteroduplexes in a partially processive 3'- to 5'-endonucleasic mode. Neo-synthesized pregenomic RNA (pgRNA) are encapsidated together with the P protein, and reverse-transcribed inside the nucleocapsid. Initiation of reverse-transcription occurs first by binding the epsilon loop on the pgRNA genome, and is initiated by protein priming, thereby the 5'-end of (-)DNA is covalently linked to P protein. Partial (+)DNA is synthesized from the (-)DNA template and generates the relaxed circular DNA (RC-DNA) genome. After budding and infection, the RC-DNA migrates in the nucleus, and is converted into a plasmid-like covalently closed circular DNA (cccDNA). The activity of P protein does not seem to be necessary for cccDNA generation, and is presumably released from (+)DNA by host nuclear DNA repair machinery. This Homo sapiens (Human) protein is Protein P.